The sequence spans 407 residues: Protein FAM53B (407 aa).

Disordered stretches follow at residues 204–286 and 306–380; these read SSSM…RPSL and ITGE…DTEP. Basic and acidic residues-rich tracts occupy residues 264–281 and 327–339; these read LNEK…DTHK and DAVD…HNLK. The Nuclear localization signal signature appears at 272–275; sequence KRRR. Acidic residues predominate over residues 357–369; sequence ITEEVDWNCDDGT.

This sequence belongs to the FAM53 family. Interacts with ctnnb1. As to expression, predominantly expressed in proliferating cells throughout embryonic development.

The protein localises to the nucleus. In terms of biological role, acts as a regulator of Wnt signaling pathway by regulating beta-catenin (ctnnb1) nuclear localization. This is Protein FAM53B from Oryzias latipes (Japanese rice fish).